Consider the following 198-residue polypeptide: Peptidyl-tRNA hydrolase (198 aa).

Y18 contributes to the tRNA binding site. H23 acts as the Proton acceptor in catalysis. Positions 69, 71, and 117 each coordinate tRNA.

It belongs to the PTH family. As to quaternary structure, monomer.

The protein resides in the cytoplasm. The catalysed reaction is an N-acyl-L-alpha-aminoacyl-tRNA + H2O = an N-acyl-L-amino acid + a tRNA + H(+). Hydrolyzes ribosome-free peptidyl-tRNAs (with 1 or more amino acids incorporated), which drop off the ribosome during protein synthesis, or as a result of ribosome stalling. Functionally, catalyzes the release of premature peptidyl moieties from peptidyl-tRNA molecules trapped in stalled 50S ribosomal subunits, and thus maintains levels of free tRNAs and 50S ribosomes. This Idiomarina loihiensis (strain ATCC BAA-735 / DSM 15497 / L2-TR) protein is Peptidyl-tRNA hydrolase.